We begin with the raw amino-acid sequence, 612 residues long: MAAGGVDVSRSSVAVKKDYDFYRNGSRDVYVRQSGRDDERRQIKRPSDHDLRRNDGRHRSRLAYEKGELREEAEVQRPSEKRRKFSPIVWNAEKVGRAPSREKTKSPFPVPTTTVISNQAVAGKTTSNDQVNALMSPEPSYLAPVQPSEALLAVKHPVDDLEEGQLEEEQVMQEDVKEGLLEEEQVMQEPNIKTSRWGTGLTSPKEELISVNVSKTNRWNRSSLTPECEEVMVSEEQQCYSSGSGSGHLSVEKLSADGNSGREYYSSDHDELEHEDQDSLTPGEMNMMFGSRSVNEFQKLNKINEGTYGIVYKARDEKTKEIVALKKIKMKEDRFEEEYGFPLTSLREINILLSCNHPAIVNVKEVVVGGKNDNDVYMVMEHLEHDLRGVMDRRKEPFSTSEVKCLMMQLLDGLKYLHTNWIIHRDLKPSNLLMNNCGELKICDFGMARQYGSPIKPYTQMVITQWYRPPELLLGAKEYSTAVDMWSVGCIMAELLSQKPLFPGKSELDQLQKIFAVLGTPNEAIWPGFSSFPNAKAKFPTQPYNMLRKKFPAISFVGGQILSERGFDLLNSLLTLDPEKRLTVEDALNHGWFHEVPLPKSKDFMPTYPPKR.

Residues 26–54 are compositionally biased toward basic and acidic residues; it reads SRDVYVRQSGRDDERRQIKRPSDHDLRRN. 2 disordered regions span residues 26–60 and 239–278; these read SRDV…RHRS and CYSS…EDQD. Residues 297–593 enclose the Protein kinase domain; sequence FQKLNKINEG…VEDALNHGWF (297 aa). ATP is bound by residues 303 to 311 and lysine 326; that span reads INEGTYGIV. Residue tyrosine 308 is modified to Phosphotyrosine. Catalysis depends on aspartate 426, which acts as the Proton acceptor. Serine 453 is modified (phosphoserine). Position 459 is a phosphothreonine (threonine 459).

It belongs to the protein kinase superfamily. Ser/Thr protein kinase family. Forms a complex with CYCL1-1. Associated with the spliceosome. Interacts with RS2Z33. Expressed in leaves and inflorescences. Lower levels of expression in roots and stems.

It localises to the nucleus speckle. It carries out the reaction L-seryl-[protein] + ATP = O-phospho-L-seryl-[protein] + ADP + H(+). It catalyses the reaction L-threonyl-[protein] + ATP = O-phospho-L-threonyl-[protein] + ADP + H(+). In terms of biological role, cyclin-dependent kinase involved in pre-mRNA splicing. Required for the correct splicing of the sixth intron of CALS5 pre-mRNA. May stabilize the binding of U1 snRNP to this rare type of intron with a GC 5'SS. Involved in chromosome pairing and is required for the completion of synapsis in male meiocytes at high ambient temperatures. The chain is Cyclin-dependent kinase G1 (CDKG1) from Arabidopsis thaliana (Mouse-ear cress).